We begin with the raw amino-acid sequence, 89 residues long: Serine-rich and transmembrane domain-containing 2 (89 aa).

The N-linked (GlcNAc...) asparagine glycan is linked to asparagine 11. The helical transmembrane segment at 38–58 threads the bilayer; the sequence is YVGLFLSLLAILLILLFTMLL.

It localises to the membrane. The chain is Serine-rich and transmembrane domain-containing 2 from Mus musculus (Mouse).